A 371-amino-acid chain; its full sequence is Queuine tRNA-ribosyltransferase (371 aa).

D90 (nucleophile) is an active-site residue. D90 acts as the Proton acceptor in catalysis. Residues D90–F94, S91, D144, Q189, and G215 contribute to the substrate site. The tract at residues G246–N252 is RNA binding. D265 serves as the catalytic Nucleophile. The interval T270–R274 is RNA binding; important for wobble base 34 recognition. Zn(2+) is bound by residues C303, C305, C308, and H334.

This sequence belongs to the queuine tRNA-ribosyltransferase family. Homodimer. Within each dimer, one monomer is responsible for RNA recognition and catalysis, while the other monomer binds to the replacement base PreQ1. It depends on Zn(2+) as a cofactor.

It catalyses the reaction 7-aminomethyl-7-carbaguanine + guanosine(34) in tRNA = 7-aminomethyl-7-carbaguanosine(34) in tRNA + guanine. Its pathway is tRNA modification; tRNA-queuosine biosynthesis. Catalyzes the base-exchange of a guanine (G) residue with the queuine precursor 7-aminomethyl-7-deazaguanine (PreQ1) at position 34 (anticodon wobble position) in tRNAs with GU(N) anticodons (tRNA-Asp, -Asn, -His and -Tyr). Catalysis occurs through a double-displacement mechanism. The nucleophile active site attacks the C1' of nucleotide 34 to detach the guanine base from the RNA, forming a covalent enzyme-RNA intermediate. The proton acceptor active site deprotonates the incoming PreQ1, allowing a nucleophilic attack on the C1' of the ribose to form the product. After dissociation, two additional enzymatic reactions on the tRNA convert PreQ1 to queuine (Q), resulting in the hypermodified nucleoside queuosine (7-(((4,5-cis-dihydroxy-2-cyclopenten-1-yl)amino)methyl)-7-deazaguanosine). This chain is Queuine tRNA-ribosyltransferase, found in Helicobacter pylori (strain ATCC 700392 / 26695) (Campylobacter pylori).